The following is a 144-amino-acid chain: Large ribosomal subunit protein uL13 (144 aa).

It belongs to the universal ribosomal protein uL13 family. Part of the 50S ribosomal subunit.

Its function is as follows. This protein is one of the early assembly proteins of the 50S ribosomal subunit, although it is not seen to bind rRNA by itself. It is important during the early stages of 50S assembly. The sequence is that of Large ribosomal subunit protein uL13 from Nitrosomonas eutropha (strain DSM 101675 / C91 / Nm57).